A 277-amino-acid polypeptide reads, in one-letter code: Ras suppressor protein 1 (277 aa).

Residues 1-23 (MSKSLKKLVEESREKNQPEVDMS) form a disordered region. Residue Ser2 is modified to N-acetylserine. Positions 7 to 23 (KLVEESREKNQPEVDMS) are enriched in basic and acidic residues. 7 LRR repeats span residues 41–63 (HITQ…AELK), 64–85 (NLEV…ISSL), 87–108 (KLKH…FGSS), 110–133 (LLEV…FFYL), 135–156 (TLRA…IGKL), 158–179 (KLQI…IGEL), and 181–202 (QLKE…LGNL). Positions 250–277 (MQANPEPPKKNNDKSKKISRKPLAAKNK) are disordered. Residues 256–265 (PPKKNNDKSK) show a composition bias toward basic and acidic residues.

Functionally, potentially plays a role in the Ras signal transduction pathway. Capable of suppressing v-Ras transformation in vitro. The sequence is that of Ras suppressor protein 1 (Rsu1) from Mus musculus (Mouse).